A 255-amino-acid chain; its full sequence is MKRLNKLVLGIIFLFLVISITAGCGIGKEAEVKKSFEKTLSMYPIKNLEDLYDKEGYRDDQFDKNDKGTWIINSEMVIQPNNEDMVAKGMVLYMNRNTKTTNGYYYVDVTKDEDEGKPHDNEKRYPVKMVDNKIIPTKEIKDKNIKKEIENFKFFVQYGNFKDLSKYKDGDISYNPEVPSYSAKYQVTNDDYNVKQLRKRYDIPTNKAPKLLLKGTGNLKGSSVGYKDIEFTFVEKKGENIYFSDSLHLEPSEDK.

The first 23 residues, 1–23 (MKRLNKLVLGIIFLFLVISITAG), serve as a signal peptide directing secretion. A lipid anchor (N-palmitoyl cysteine) is attached at cysteine 24. The S-diacylglycerol cysteine moiety is linked to residue cysteine 24.

The protein belongs to the staphylococcal tandem lipoprotein family.

The protein localises to the cell membrane. This is an uncharacterized protein from Staphylococcus aureus (strain Mu50 / ATCC 700699).